We begin with the raw amino-acid sequence, 148 residues long: 3-dehydroquinate dehydratase (148 aa).

The Proton acceptor role is filled by Tyr22. 3 residues coordinate substrate: Asn73, His79, and Asp86. His99 (proton donor) is an active-site residue. Residues 100–101 (LS) and Arg110 contribute to the substrate site.

It belongs to the type-II 3-dehydroquinase family. In terms of assembly, homododecamer.

It carries out the reaction 3-dehydroquinate = 3-dehydroshikimate + H2O. It functions in the pathway metabolic intermediate biosynthesis; chorismate biosynthesis; chorismate from D-erythrose 4-phosphate and phosphoenolpyruvate: step 3/7. Catalyzes a trans-dehydration via an enolate intermediate. The protein is 3-dehydroquinate dehydratase of Prochlorococcus marinus (strain MIT 9211).